A 403-amino-acid polypeptide reads, in one-letter code: Non-structural maintenance of chromosomes element 4 homolog A (403 aa).

Over residues 1-45 (MRKTVKRESEATGGKREADDEPEKLRSVKKEKQRKTEADSVRPDE) the composition is skewed to basic and acidic residues. 3 disordered regions span residues 1 to 57 (MRKT…QGIS), 194 to 226 (LKQRKRAPNRKRTKPGEGVRPDEVDDSQSEEKT), and 342 to 403 (SSCP…LTSS). The span at 196–206 (QRKRAPNRKRT) shows a compositional bias: basic residues. A compositionally biased stretch (low complexity) spans 342–353 (SSCPAASAPASA). Polar residues predominate over residues 354–363 (DFTQDTQTTP). The span at 384-393 (TPDKEGDGTR) shows a compositional bias: basic and acidic residues. The span at 394 to 403 (RRCKRRLTSS) shows a compositional bias: basic residues.

It belongs to the NSE4 family. As to quaternary structure, interacts with SMC5, SMC6A or SMC6B. The SMC5-SMC6 complex is composed of the SMC5 and SMC6 heterodimer attached via their hinge domain and from the non-SMC subunit NSE4A or NSE4B. Expressed in seedlings, rosette leaves and floral buds.

The protein resides in the nucleus. In terms of biological role, component of the SMC5-SMC6 complex, that promotes sister chromatid alignment after DNA damage and facilitates double-stranded DNA breaks (DSBs) repair via homologous recombination between sister chromatids. This chain is Non-structural maintenance of chromosomes element 4 homolog A (NSE4A), found in Arabidopsis thaliana (Mouse-ear cress).